Here is a 450-residue protein sequence, read N- to C-terminus: Growth/differentiation factor 7 (450 aa).

Positions 1–19 (MDLSAAAALCLWLLSACRP) are cleaved as a signal peptide. The propeptide occupies 20-321 (RDGLEAAAVL…AVIGGRRRRR (302 aa)). N-linked (GlcNAc...) asparagine glycosylation occurs at N83. The disordered stretch occupies residues 296-349 (ASEPLPDPGTGTASPRAVIGGRRRRRTALAGTRTAQGSGGGAGRGHGRRGRSRC). A compositionally biased stretch (basic residues) spans 340–349 (GHGRRGRSRC). 3 disulfides stabilise this stretch: C349–C415, C378–C447, and C382–C449.

This sequence belongs to the TGF-beta family. In terms of assembly, homodimer; disulfide-linked.

The protein resides in the secreted. In terms of biological role, may play an active role in the motor area of the primate neocortex. The sequence is that of Growth/differentiation factor 7 (GDF7) from Homo sapiens (Human).